Here is a 401-residue protein sequence, read N- to C-terminus: Mu-type opioid receptor (401 aa).

Residues 1–69 lie on the Extracellular side of the membrane; the sequence is MDSSAVPANA…CPPTGSPSMI (69 aa). Asn-9, Asn-12, Asn-34, Asn-41, and Asn-49 each carry an N-linked (GlcNAc...) asparagine glycan. The helical transmembrane segment at 70–94 threads the bilayer; the sequence is TAITIMALYSIVCVVGLFGNFLVMY. Residues 95–107 lie on the Cytoplasmic side of the membrane; it reads VIVRYTKMKTATN. The helical transmembrane segment at 108 to 132 threads the bilayer; sequence IYIFNLALADALATSTLPFQSVNYL. At 133 to 143 the chain is on the extracellular side; sequence MGTWPFGTILC. Residues Cys-143 and Cys-220 are joined by a disulfide bond. Residues 144–166 form a helical membrane-spanning segment; the sequence is KIVISIDYYNMFTSIFTLCTMSV. The Cytoplasmic portion of the chain corresponds to 167–186; that stretch reads DRYIAVCHPVKALDFRTPRN. A Phosphotyrosine modification is found at Tyr-169. The chain crosses the membrane as a helical span at residues 187-208; sequence AKIINVCNWILSSAIGLPVMFM. The Extracellular portion of the chain corresponds to 209–231; that stretch reads ATTKYRHGSIDCTLTFSHPTWYW. The helical transmembrane segment at 232–256 threads the bilayer; that stretch reads ENLLKICVFIFAFIMPVLIITVCYG. Over 257–280 the chain is Cytoplasmic; that stretch reads LMILRLKSVRMLSGSKEKDRNLRR. The helical transmembrane segment at 281-307 threads the bilayer; sequence ITRMVLVVVAVFIVCWTPIHIYVIIKA. The Extracellular portion of the chain corresponds to 308 to 315; that stretch reads LVTIPETT. Residues 316–339 form a helical membrane-spanning segment; the sequence is FQTVSWHFCIALGYTNSCLNPVLY. The NPxxY; plays a role in stabilizing the activated conformation of the receptor motif lies at 335–339; it reads NPVLY. Over 340 to 401 the chain is Cytoplasmic; that stretch reads AFLDENFKRC…NLEAETAPLP (62 aa). Cys-354 is lipidated: S-palmitoyl cysteine. The disordered stretch occupies residues 365-388; the sequence is NSTRIRQNTRDHPSTANTVDRTNH. Ser-366 bears the Phosphoserine mark. A Phosphothreonine modification is found at Thr-373. Ser-378 is subject to Phosphoserine. A Phosphothreonine modification is found at Thr-397.

Belongs to the G-protein coupled receptor 1 family. Forms homooligomers and heterooligomers with other GPCRs, such as OPRD1, OPRK1, OPRL1, NPFFR2, ADRA2A, SSTR2, CNR1 and CCR5 (probably in dimeric forms). Interacts with heterotrimeric G proteins; interaction with a heterotrimeric complex containing GNAI1, GNB1 and GNG2 stabilizes the active conformation of the receptor and increases its affinity for endomorphin-2, the synthetic opioid peptide DAMGO and for morphinan agonists. Interacts with PPL; the interaction disrupts agonist-mediated G-protein activation. Interacts (via C-terminus) with DNAJB4 (via C-terminus). Interacts with calmodulin; the interaction inhibits the constitutive activity of OPRM1; it abolishes basal and attenuates agonist-stimulated G-protein coupling. Interacts with FLNA, PLD2, RANBP9 and WLS and GPM6A. Interacts with RTP4. Interacts with SYP and GNAS. Interacts with RGS9, RGS17, RGS20, RGS4, PPP1R9B and HINT1. Post-translationally, phosphorylated. Differentially phosphorylated in basal and agonist-induced conditions. Agonist-mediated phosphorylation modulates receptor internalization. Phosphorylated by GRK2 in a agonist-dependent manner. Phosphorylation at Tyr-169 requires receptor activation, is dependent on non-receptor protein tyrosine kinase Src and results in a decrease in agonist efficacy by reducing G-protein coupling efficiency. Phosphorylated on tyrosine residues; the phosphorylation is involved in agonist-induced G-protein-independent receptor down-regulation. Phosphorylation at Ser-378 is involved in G-protein-dependent but not beta-arrestin-dependent activation of the ERK pathway. In terms of processing, ubiquitinated. A basal ubiquitination seems not to be related to degradation. Ubiquitination is increased upon formation of OPRM1:OPRD1 oligomers leading to proteasomal degradation; the ubiquitination is diminished by RTP4.

It is found in the cell membrane. The protein resides in the cell projection. The protein localises to the axon. It localises to the perikaryon. Its subcellular location is the dendrite. It is found in the endosome. Receptor for endogenous opioids such as beta-endorphin and endomorphin. Receptor for natural and synthetic opioids including morphine, heroin, DAMGO, fentanyl, etorphine, buprenorphin and methadone. Also activated by enkephalin peptides, such as Met-enkephalin or Met-enkephalin-Arg-Phe, with higher affinity for Met-enkephalin-Arg-Phe. Agonist binding to the receptor induces coupling to an inactive GDP-bound heterotrimeric G-protein complex and subsequent exchange of GDP for GTP in the G-protein alpha subunit leading to dissociation of the G-protein complex with the free GTP-bound G-protein alpha and the G-protein beta-gamma dimer activating downstream cellular effectors. The agonist- and cell type-specific activity is predominantly coupled to pertussis toxin-sensitive G(i) and G(o) G alpha proteins, GNAI1, GNAI2, GNAI3 and GNAO1, and to a lesser extent to pertussis toxin-insensitive G alpha proteins GNAZ and GNA15. They mediate an array of downstream cellular responses, including inhibition of adenylate cyclase activity and both N-type and L-type calcium channels, activation of inward rectifying potassium channels, mitogen-activated protein kinase (MAPK), phospholipase C (PLC), phosphoinositide/protein kinase (PKC), phosphoinositide 3-kinase (PI3K) and regulation of NF-kappa-B. Also couples to adenylate cyclase stimulatory G alpha proteins. The selective temporal coupling to G-proteins and subsequent signaling can be regulated by RGSZ proteins, such as RGS9, RGS17 and RGS4. Phosphorylation by members of the GPRK subfamily of Ser/Thr protein kinases and association with beta-arrestins is involved in short-term receptor desensitization. Beta-arrestins associate with the GPRK-phosphorylated receptor and uncouple it from the G-protein thus terminating signal transduction. The phosphorylated receptor is internalized through endocytosis via clathrin-coated pits which involves beta-arrestins. The activation of the ERK pathway occurs either in a G-protein-dependent or a beta-arrestin-dependent manner and is regulated by agonist-specific receptor phosphorylation. Acts as a class A G-protein coupled receptor (GPCR) which dissociates from beta-arrestin at or near the plasma membrane and undergoes rapid recycling. Receptor down-regulation pathways are varying with the agonist and occur dependent or independent of G-protein coupling. Endogenous ligands induce rapid desensitization, endocytosis and recycling. Heterooligomerization with other GPCRs can modulate agonist binding, signaling and trafficking properties. Involved in neurogenesis. This is Mu-type opioid receptor (OPRM1) from Pan troglodytes (Chimpanzee).